The chain runs to 522 residues: tRNA-2-methylthio-N(6)-dimethylallyladenosine synthase (522 aa).

Low complexity predominate over residues 1–26; it reads MSLTIPSPASGTSTSATTDTAPAAAP. Residues 1–27 form a disordered region; sequence MSLTIPSPASGTSTSATTDTAPAAAPQ. The MTTase N-terminal domain occupies 28 to 143; that stretch reads RTYQVRTFGC…LPALLDRARH (116 aa). C37, C72, C106, C180, C184, and C187 together coordinate [4Fe-4S] cluster. The 231-residue stretch at 166-396 folds into the Radical SAM core domain; sequence RDSVYSGWVS…TALQDRIAAE (231 aa). The 71-residue stretch at 399-469 folds into the TRAM domain; the sequence is ARQLGRRVEV…AFHLVADPAS (71 aa). A disordered region spans residues 481–522; sequence GDAWDRSQADSCGAPVAGGGAGSNGGKGGVSLGMPALPVRRS. A compositionally biased stretch (gly residues) spans 496 to 511; that stretch reads VAGGGAGSNGGKGGVS.

The protein belongs to the methylthiotransferase family. MiaB subfamily. In terms of assembly, monomer. It depends on [4Fe-4S] cluster as a cofactor.

It is found in the cytoplasm. It carries out the reaction N(6)-dimethylallyladenosine(37) in tRNA + (sulfur carrier)-SH + AH2 + 2 S-adenosyl-L-methionine = 2-methylsulfanyl-N(6)-dimethylallyladenosine(37) in tRNA + (sulfur carrier)-H + 5'-deoxyadenosine + L-methionine + A + S-adenosyl-L-homocysteine + 2 H(+). In terms of biological role, catalyzes the methylthiolation of N6-(dimethylallyl)adenosine (i(6)A), leading to the formation of 2-methylthio-N6-(dimethylallyl)adenosine (ms(2)i(6)A) at position 37 in tRNAs that read codons beginning with uridine. In Arthrobacter sp. (strain FB24), this protein is tRNA-2-methylthio-N(6)-dimethylallyladenosine synthase.